Reading from the N-terminus, the 552-residue chain is 2,3-bisphosphoglycerate-independent phosphoglycerate mutase (552 aa).

Positions 1-25 are enriched in polar residues; the sequence is MTNTQQQSESIDDNQAQLSKQQNSD. Residues 1–30 form a disordered region; it reads MTNTQQQSESIDDNQAQLSKQQNSDNNKKV. The Mn(2+) site is built by Asp38 and Ser88. Ser88 (phosphoserine intermediate) is an active-site residue. Residues His149, 179-180, Arg217, Arg223, 293-296, and Lys373 contribute to the substrate site; these read RD and RADR. Positions 440, 444, 481, 482, and 500 each coordinate Mn(2+).

This sequence belongs to the BPG-independent phosphoglycerate mutase family. Monomer. Requires Mn(2+) as cofactor.

It carries out the reaction (2R)-2-phosphoglycerate = (2R)-3-phosphoglycerate. The protein operates within carbohydrate degradation; glycolysis; pyruvate from D-glyceraldehyde 3-phosphate: step 3/5. Its function is as follows. Catalyzes the interconversion of 2-phosphoglycerate and 3-phosphoglycerate. This is 2,3-bisphosphoglycerate-independent phosphoglycerate mutase from Psychrobacter arcticus (strain DSM 17307 / VKM B-2377 / 273-4).